The sequence spans 1323 residues: Regulatory protein ADR1 (1323 aa).

S54 is subject to Phosphoserine. 2 consecutive C2H2-type zinc fingers follow at residues 104–126 (FVCE…YRSH) and 132–155 (YPCG…QKIH). A disordered region spans residues 175 to 216 (KARKNSASSVKFQTPTYGTPDNGNFLNRTTANTRRKASPEAN). The segment covering 179–206 (NSASSVKFQTPTYGTPDNGNFLNRTTAN) has biased composition (polar residues). A phosphothreonine mark is found at T188 and T193. S230 is subject to Phosphoserine; by PKA; in vitro. Phosphoserine is present on S258. T259 is modified (phosphothreonine). A phosphoserine mark is found at S299, S323, and S325. T327 carries the phosphothreonine modification.

Phosphorylation at Ser-230 by cAMP-dependent protein kinase A does not affect DNA binding but appears to prevent transcription of ADH2 during glucose repression.

It is found in the nucleus. Required for transcriptional activation of glucose-repressible alcohol dehydrogenase (ADH2). The chain is Regulatory protein ADR1 (ADR1) from Saccharomyces cerevisiae (strain ATCC 204508 / S288c) (Baker's yeast).